The chain runs to 798 residues: Phenylalanine--tRNA ligase beta subunit (798 aa).

The tRNA-binding domain occupies 39–147; the sequence is AARLAGFTLA…PSGEVGERFI (109 aa). A B5 domain is found at 404 to 475; it reads DHSRAYKLDA…RIASLTKLVG (72 aa). The Mg(2+) site is built by Asp-453, Asp-459, Glu-462, and Glu-463. Residues 704–797 form the FDX-ACB domain; the sequence is RDLQAVERDF…VAKATGGTLR (94 aa).

This sequence belongs to the phenylalanyl-tRNA synthetase beta subunit family. Type 1 subfamily. Tetramer of two alpha and two beta subunits. Mg(2+) is required as a cofactor.

Its subcellular location is the cytoplasm. The catalysed reaction is tRNA(Phe) + L-phenylalanine + ATP = L-phenylalanyl-tRNA(Phe) + AMP + diphosphate + H(+). The protein is Phenylalanine--tRNA ligase beta subunit of Ruegeria pomeroyi (strain ATCC 700808 / DSM 15171 / DSS-3) (Silicibacter pomeroyi).